Here is a 454-residue protein sequence, read N- to C-terminus: Bifunctional protein GlmU (454 aa).

Positions 1–226 (MALNVVILAA…AIEVEGANNR (226 aa)) are pyrophosphorylase. UDP-N-acetyl-alpha-D-glucosamine is bound by residues 8 to 11 (LAAG), Lys-22, Gln-73, 78 to 79 (GT), 100 to 102 (YGD), Gly-137, Glu-151, Asn-166, and Asn-224. A Mg(2+)-binding site is contributed by Asp-102. Asn-224 provides a ligand contact to Mg(2+). Positions 227–247 (VQLAQLERAYQARAAEKLMLE) are linker. An N-acetyltransferase region spans residues 248-454 (GANLRDPARI…GWTRPVKQKK (207 aa)). 2 residues coordinate UDP-N-acetyl-alpha-D-glucosamine: Arg-330 and Lys-348. The active-site Proton acceptor is His-360. UDP-N-acetyl-alpha-D-glucosamine contacts are provided by Tyr-363 and Asn-374. Acetyl-CoA contacts are provided by residues Ala-377, 383–384 (NY), Ser-402, Ala-420, and Arg-437.

In the N-terminal section; belongs to the N-acetylglucosamine-1-phosphate uridyltransferase family. The protein in the C-terminal section; belongs to the transferase hexapeptide repeat family. In terms of assembly, homotrimer. The cofactor is Mg(2+).

The protein resides in the cytoplasm. The catalysed reaction is alpha-D-glucosamine 1-phosphate + acetyl-CoA = N-acetyl-alpha-D-glucosamine 1-phosphate + CoA + H(+). It carries out the reaction N-acetyl-alpha-D-glucosamine 1-phosphate + UTP + H(+) = UDP-N-acetyl-alpha-D-glucosamine + diphosphate. The protein operates within nucleotide-sugar biosynthesis; UDP-N-acetyl-alpha-D-glucosamine biosynthesis; N-acetyl-alpha-D-glucosamine 1-phosphate from alpha-D-glucosamine 6-phosphate (route II): step 2/2. It participates in nucleotide-sugar biosynthesis; UDP-N-acetyl-alpha-D-glucosamine biosynthesis; UDP-N-acetyl-alpha-D-glucosamine from N-acetyl-alpha-D-glucosamine 1-phosphate: step 1/1. Its pathway is bacterial outer membrane biogenesis; LPS lipid A biosynthesis. Catalyzes the last two sequential reactions in the de novo biosynthetic pathway for UDP-N-acetylglucosamine (UDP-GlcNAc). The C-terminal domain catalyzes the transfer of acetyl group from acetyl coenzyme A to glucosamine-1-phosphate (GlcN-1-P) to produce N-acetylglucosamine-1-phosphate (GlcNAc-1-P), which is converted into UDP-GlcNAc by the transfer of uridine 5-monophosphate (from uridine 5-triphosphate), a reaction catalyzed by the N-terminal domain. The protein is Bifunctional protein GlmU of Shewanella loihica (strain ATCC BAA-1088 / PV-4).